A 395-amino-acid chain; its full sequence is MKVAIFDAFNGASGDMILASLLGVGISEEEIDEVVKALGIDVNYSMTTVSVRGISARRVEVEERDGERSFKEVLEIIRSSNLEEGVKKNAIAVFELIARAEGKVHGRDYREGVFHEVGADDAIFDVVCCVKAFENLKTAGYEFFATPVRAGSGFVEFSHGKYPVPPPAVLEILKSSNLEVVMDGEGELLTPTGAAILSHYCKPLKPFPIRVKEVSYGAGKRETDVPNVLRLILGETAFHDSIVVIETSVDDLSGEMIGYAMKKLLERDDVLDAVIIPAYGKKMRPASILKVISPTHRSEEVAAEVMRLTGSLGIRIIPVHHRLISERMEEVVKVEISGKEFDVRVKRSYPGFRHLKPEFDDIAVIADELNIPPHVVYREIVRKIVGAENADSNGQ.

The protein belongs to the LarC family.

This is Putative nickel insertion protein from Archaeoglobus fulgidus (strain ATCC 49558 / DSM 4304 / JCM 9628 / NBRC 100126 / VC-16).